The chain runs to 426 residues: UDP-N-acetylglucosamine 1-carboxyvinyltransferase (426 aa).

22-23 is a phosphoenolpyruvate binding site; that stretch reads KN. Position 99 (Arg-99) interacts with UDP-N-acetyl-alpha-D-glucosamine. Catalysis depends on Cys-123, which acts as the Proton donor. At Cys-123 the chain carries 2-(S-cysteinyl)pyruvic acid O-phosphothioketal. Residues 128 to 132, Asp-313, and Ile-335 each bind UDP-N-acetyl-alpha-D-glucosamine; that span reads RPIDL.

It belongs to the EPSP synthase family. MurA subfamily.

It localises to the cytoplasm. It catalyses the reaction phosphoenolpyruvate + UDP-N-acetyl-alpha-D-glucosamine = UDP-N-acetyl-3-O-(1-carboxyvinyl)-alpha-D-glucosamine + phosphate. Its pathway is cell wall biogenesis; peptidoglycan biosynthesis. Its function is as follows. Cell wall formation. Adds enolpyruvyl to UDP-N-acetylglucosamine. This is UDP-N-acetylglucosamine 1-carboxyvinyltransferase from Zymomonas mobilis subsp. mobilis (strain ATCC 31821 / ZM4 / CP4).